The following is a 1090-amino-acid chain: ATP-dependent helicase/deoxyribonuclease subunit B (1090 aa).

7 to 14 lines the ATP pocket; the sequence is GPVGSGKS. Residues C719, C1035, C1038, and C1044 each contribute to the [4Fe-4S] cluster site.

The protein belongs to the helicase family. AddB/RexB type 1 subfamily. As to quaternary structure, heterodimer of AddA and AddB. Mg(2+) is required as a cofactor. [4Fe-4S] cluster serves as cofactor.

The heterodimer acts as both an ATP-dependent DNA helicase and an ATP-dependent, dual-direction single-stranded exonuclease. Recognizes the chi site generating a DNA molecule suitable for the initiation of homologous recombination. The AddB subunit has 5' -&gt; 3' nuclease activity but not helicase activity. The protein is ATP-dependent helicase/deoxyribonuclease subunit B of Carboxydothermus hydrogenoformans (strain ATCC BAA-161 / DSM 6008 / Z-2901).